We begin with the raw amino-acid sequence, 97 residues long: Secreted Ly-6/uPAR domain-containing protein 2 (97 aa).

The signal sequence occupies residues M1–A22. Cystine bridges form between C25–C47, C28–C34, C40–C68, C72–C88, and C89–C94. The UPAR/Ly6 domain maps to C25–N95.

As to quaternary structure, interacts with CHRNA3, CHRNA4, CHRNA5, CHRNA7, CHRNB2 and CHRNB4. Interacts with CHRM1 and CHRM3 probably in an allosteric manner. Expressed at highest levels in cervix and esophagus, followed by adult and fetal skin. Expressed at lower levels in brain, lung, stomach, small intestine, colon, rectum, uterus, and thymus. Not detected in spleen nor bone marrow. Up-regulated 3-fold in psoriatic lesional skin. In the epidermis, predominantly produced by keratinocytes of the suprabasal epidermal compartment (at protein level). In attached gingiva, produced at highest levels by basal cells located in the lowermost epithelial layers (at protein level). Detected in serum (at protein level).

The protein resides in the secreted. Functionally, binds and may modulate the functional properties of nicotinic and muscarinic acetylcholine receptors. May regulate keratinocytes proliferation, differentiation and apoptosis. In vitro moderately inhibits ACh-evoked currents of alpha-3:beta-2-containing nAChRs and strongly these of alpha-4:beta-2-containing nAChRs, modulates alpha-7-containing nAChRs, and inhibits nicotine-induced signaling probably implicating alpha-3:beta-4-containing nAChRs. Proposed to act on alpha-3:beta-2 and alpha-7 nAChRs in an orthosteric, and on mAChRs, such as CHRM1 and CHRM3, in an allosteric manner. The protein is Secreted Ly-6/uPAR domain-containing protein 2 of Homo sapiens (Human).